A 548-amino-acid polypeptide reads, in one-letter code: MRTSPSSQLSLHGVTKRYDDRVVLSQVSLAISPGEKAGIIGDNGAGKSTLLRLLAGEERPDAGEVTVIAPGGVGYLPQTLGLPPRATVQDAIDLAMTELRVLEAELRRTEAALAEAATDEALQDALTAYARLTEQYEVRDGYGADARVDAALHGLGLPGLPRDRRLGTLSGGERSRLALAATLASQPELLLLDEPTNDLDDRAVHWLEEHLSGHRGTVVTVTHDRVFLDRLTATVLEVDGRGVSRHGDGYAGYLAAKAAERRRRQQQYDEWRAELDRNRRLAEANVARLDGIPRKMGKAAFGHGAFRARGRDHGAMSRVRNAKERVERLTANPVAPPADRLSLTARIATADGPGEAPAAELDGVVVGSRLRVPKLRLGAAERLLITGPNGAGKSTLLSVLAGELSPDAGAVSVPGRVGHLRQEETPWPAKLTVLEAFAHNRPGDRDEQADRRLSLGLFEPEALRLRVGELSYGQRRRIELARLVSEPVGLLLLDEPTNHLSPALVEELEEALTGYGGALVLVTHDRRMRSRFTGSHLELREGVVSGAR.

2 consecutive ABC transporter domains span residues 9-265 (LSLH…RRRQ) and 347-547 (IATA…VSGA). ATP contacts are provided by residues 41 to 48 (GDNGAGKS) and 387 to 394 (GPNGAGKS).

The protein belongs to the ABC transporter superfamily.

The protein resides in the cell membrane. Its function is as follows. Responsible for tylosin resistance, and is proposed to be a subunit of a multicomponent export system for the energy-dependent efflux of tylosin. This Streptomyces fradiae (Streptomyces roseoflavus) protein is Tylosin resistance ATP-binding protein TlrC (tlrC).